A 159-amino-acid polypeptide reads, in one-letter code: Putative ribosomal RNA large subunit methyltransferase H (159 aa).

Residues L76, G108, and 127–132 (FSKMTF) each bind S-adenosyl-L-methionine.

The protein belongs to the RNA methyltransferase RlmH family.

It localises to the cytoplasm. The enzyme catalyses pseudouridine(1915) in 23S rRNA + S-adenosyl-L-methionine = N(3)-methylpseudouridine(1915) in 23S rRNA + S-adenosyl-L-homocysteine + H(+). Its function is as follows. Specifically methylates the pseudouridine at position 1915 (m3Psi1915) in 23S rRNA. The sequence is that of Putative ribosomal RNA large subunit methyltransferase H from Methanococcus maripaludis (strain C7 / ATCC BAA-1331).